The following is a 258-amino-acid chain: MLDFTEASLKKVLTRYNVALEKALTPEEAAEELYPKDELIYPIAKAIFEGEEDDVVEGLQAAIEAGKDPIDLIDDALMVGMGVVIRLYDEGVIFLPNVMMSADAMLEGIEYCKENSGATPKTKGTVVCHVAEGDVHDIGKNIVTALLRANGYNVVDLGRDVPAEEVLAAVQKEKPIMLTGTALMTTTMYAFKEVNDMLLENGIKIPFACGGGAVNQDFVSQFALGVYGEEAADAPKIADAIIAGTTDVTELREKFHKH.

Positions 30–124 (AEELYPKDEL…NSGATPKTKG (95 aa)) constitute a B12-binding N-terminal domain. One can recognise a B12-binding domain in the interval 123–248 (KGTVVCHVAE…DAIIAGTTDV (126 aa)). His136 lines the methylcob(III)alamin pocket.

The protein belongs to the methylamine corrinoid protein family. In terms of assembly, heterotetramer, composed of 2 MtaB and 2 MtaC subunits.

In terms of biological role, harbors a corrinoid prosthetic group and acts as a methyl group carrier in methanogenesis in the methanol pathway. The methyl group of methanol is first transferred to the corrinoid prosthetic group of MtaC in the cob(I)amide oxidation state. This reaction is mediated by MtaB. The methyl group from MtaC is then transferred to coenzyme M by MtaA. The chain is Methanol--corrinoid protein (mtaC) from Methanosarcina barkeri (strain Fusaro / DSM 804).